The following is a 181-amino-acid chain: Ribonuclease HII (181 aa).

Residues 1 to 181 (MICGIDEVGR…SLHRKSFRLI (181 aa)) form the RNase H type-2 domain. 3 residues coordinate a divalent metal cation: D6, E7, and D98.

It belongs to the RNase HII family. Requires Mn(2+) as cofactor. Mg(2+) is required as a cofactor.

The protein localises to the cytoplasm. It carries out the reaction Endonucleolytic cleavage to 5'-phosphomonoester.. Its function is as follows. Endonuclease that specifically degrades the RNA of RNA-DNA hybrids. This is Ribonuclease HII from Borrelia recurrentis (strain A1).